The chain runs to 378 residues: Putative F-box protein At5g51000 (378 aa).

In terms of domain architecture, F-box spans 1-47 (MSTMSDLFPDLVEEILSRVPITSLKAVKLTCKQWNDLSKDSSFTKNH).

This Arabidopsis thaliana (Mouse-ear cress) protein is Putative F-box protein At5g51000.